A 324-amino-acid chain; its full sequence is o-succinylbenzoate synthase (324 aa).

Lysine 135 functions as the Proton donor in the catalytic mechanism. Positions 163, 192, and 215 each coordinate Mg(2+). The Proton acceptor role is filled by lysine 237.

The protein belongs to the mandelate racemase/muconate lactonizing enzyme family. MenC type 1 subfamily. The cofactor is a divalent metal cation.

It carries out the reaction (1R,6R)-6-hydroxy-2-succinyl-cyclohexa-2,4-diene-1-carboxylate = 2-succinylbenzoate + H2O. It functions in the pathway quinol/quinone metabolism; 1,4-dihydroxy-2-naphthoate biosynthesis; 1,4-dihydroxy-2-naphthoate from chorismate: step 4/7. The protein operates within quinol/quinone metabolism; menaquinone biosynthesis. Converts 2-succinyl-6-hydroxy-2,4-cyclohexadiene-1-carboxylate (SHCHC) to 2-succinylbenzoate (OSB). This chain is o-succinylbenzoate synthase, found in Aliivibrio salmonicida (strain LFI1238) (Vibrio salmonicida (strain LFI1238)).